Here is an 83-residue protein sequence, read N- to C-terminus: MKTLLLTLVVVTIVCLDLGYTLKCHNTQLPFIYKTCPEGKNLCFKATLRKFPLKFPVKRGCADNCPKNSALLKYVCCSTDKCN.

Residues 1–21 form the signal peptide; sequence MKTLLLTLVVVTIVCLDLGYT. Disulfide bonds link Cys24–Cys43, Cys36–Cys61, Cys65–Cys76, and Cys77–Cys82.

The protein belongs to the three-finger toxin family. Short-chain subfamily. Orphan group XV sub-subfamily. As to expression, expressed by the venom gland.

It localises to the secreted. It is found in the target cell membrane. Functionally, has low cytotoxic activity. The protein is Cytotoxin homolog 5V of Naja atra (Chinese cobra).